The sequence spans 318 residues: Methionyl-tRNA formyltransferase (318 aa).

110–113 contacts (6S)-5,6,7,8-tetrahydrofolate; it reads SLLP.

Belongs to the Fmt family.

It carries out the reaction L-methionyl-tRNA(fMet) + (6R)-10-formyltetrahydrofolate = N-formyl-L-methionyl-tRNA(fMet) + (6S)-5,6,7,8-tetrahydrofolate + H(+). Its function is as follows. Attaches a formyl group to the free amino group of methionyl-tRNA(fMet). The formyl group appears to play a dual role in the initiator identity of N-formylmethionyl-tRNA by promoting its recognition by IF2 and preventing the misappropriation of this tRNA by the elongation apparatus. The polypeptide is Methionyl-tRNA formyltransferase (Lacticaseibacillus paracasei (strain ATCC 334 / BCRC 17002 / CCUG 31169 / CIP 107868 / KCTC 3260 / NRRL B-441) (Lactobacillus paracasei)).